Consider the following 122-residue polypeptide: RxLR effector protein Avh52 (122 aa).

Residues M1–A21 form the signal peptide. Positions R50–R68 match the RxLR-dEER motif. Residues S69–V86 form a TAP1-binding region. Residues K87–K98 form a nuclear localization signal (NLS) region.

Belongs to the RxLR effector family. As to quaternary structure, interacts with host acetyl transferase TAP1.

It is found in the secreted. The protein resides in the host nucleus. Functionally, effector that suppresses plant defense responses during the early stages of pathogen infection. Suppresses cell death induced by effectors and PAMPs in plant hosts. Interacts with host acetyltransferase TAP1 and causes TAP1 relocation into the nucleus where it acetylates histones H2A and H3 during early infection, thereby promoting susceptibility of host plant to P.sojae. In Phytophthora sojae (strain P6497) (Soybean stem and root rot agent), this protein is RxLR effector protein Avh52.